Here is a 417-residue protein sequence, read N- to C-terminus: MALSAKLTLDKVDLKGKRVIMRVDFNVPMKNNQITNNQRIKAAIPSIKHCLDNGAKSVVLMSHLGRPDGIPMPDKYSLEPVADELKSLLNKDVIFLKDCVGPEVEQACANPDNGSIILLENLRFHVEEEGKGKDSSGKKISADPAKVEAFQASLSKLGDVYVNDAFGTAHRAHSSTVGVNLPQKASGFLMKKELDYFSKALEKPERPFLAILGGAKVKDKIQLIKNMLDKVNFMIIGGGMAYTFLKELKNMQIGASLFDEEGATIVKEIMEKAEKNGVKIVFPVDFVTGDKFDENAKVGQATIESGIPSGWMGLDCGPESIKINAQIVAQAKLIVWNGPIGVFEWDAFAKGTKALMDEVVKATSNGCVTIIGGGDTATCCAKWGTEDKVSHVSTGGGASLELLEGKILPGVEALSNM.

Serine 4 bears the Phosphoserine mark. Residue lysine 11 is modified to N6-acetyllysine. (2R)-3-phosphoglycerate contacts are provided by valine 23, aspartate 24, phenylalanine 25, asparagine 26, glutamine 38, and arginine 39. N6-acetyllysine is present on lysine 48. (2R)-3-phosphoglycerate is bound by residues serine 62, histidine 63, glycine 65, and arginine 66. N6-acetyllysine occurs at positions 75, 86, and 97. (2R)-3-phosphoglycerate contacts are provided by leucine 122 and arginine 123. An N6-acetyllysine mark is found at lysine 131 and lysine 146. (2R)-3-phosphoglycerate contacts are provided by histidine 170 and arginine 171. The residue at position 196 (tyrosine 196) is a Phosphotyrosine. Lysine 199 is subject to N6-acetyllysine. Glycine 214 is a binding site for ADP. Glycine 214 serves as a coordination point for CDP. Residues alanine 215 and lysine 216 each contribute to the AMP site. Alanine 215 serves as a coordination point for ATP. Residue alanine 215 participates in Mg(2+) binding. Aspartate 219 contributes to the CDP binding site. Position 219 (aspartate 219) interacts with Mg(2+). Lysine 220 contributes to the AMP binding site. Lysine 220 provides a ligand contact to ATP. Position 238 (glycine 238) interacts with ADP. Glycine 238 is a binding site for CDP. AMP is bound at residue glycine 239. Glycine 239 serves as a coordination point for ATP. Lysine 267 and lysine 291 each carry N6-acetyllysine. Glycine 313 lines the AMP pocket. ATP is bound at residue glycine 313. CDP contacts are provided by glycine 338, isoleucine 340, and phenylalanine 343. Position 343 (phenylalanine 343) interacts with ADP. Glutamate 344 lines the AMP pocket. Glutamate 344, aspartate 375, and threonine 376 together coordinate ATP. Aspartate 375 serves as a coordination point for Mg(2+).

Belongs to the phosphoglycerate kinase family. As to quaternary structure, monomer. Mg(2+) serves as cofactor. As to expression, testis and sperm. Localized on the principle piece in the sperm (at protein level). Testis-specific.

It localises to the cytoplasm. It carries out the reaction (2R)-3-phosphoglycerate + ATP = (2R)-3-phospho-glyceroyl phosphate + ADP. Its pathway is carbohydrate degradation; glycolysis; pyruvate from D-glyceraldehyde 3-phosphate: step 2/5. Essential for sperm motility and male fertility but is not required for the completion of spermatogenesis. The protein is Phosphoglycerate kinase 2 (Pgk2) of Mus musculus (Mouse).